The sequence spans 88 residues: UPF0250 protein Sfri_0694 (88 aa).

The protein belongs to the UPF0250 family.

This Shewanella frigidimarina (strain NCIMB 400) protein is UPF0250 protein Sfri_0694.